The sequence spans 1259 residues: Telomerase reverse transcriptase (1259 aa).

Residues 742–1067 (RGEPRKAVRH…SFMPWSGLLI (326 aa)) form the Reverse transcriptase domain. Positions 837, 999, and 1000 each coordinate Mg(2+).

Belongs to the reverse transcriptase family. Telomerase subfamily. As to quaternary structure, component of the telomerase ribonucleoprotein complex. In terms of tissue distribution, expressed in shoot apices and immature embryos.

Its subcellular location is the nucleus. It is found in the chromosome. It localises to the telomere. It catalyses the reaction DNA(n) + a 2'-deoxyribonucleoside 5'-triphosphate = DNA(n+1) + diphosphate. Functionally, telomerase is a ribonucleoprotein enzyme essential for the replication of chromosome termini in most eukaryotes. It elongates telomeres. It is a reverse transcriptase that adds simple sequence repeats to chromosome ends by copying a template sequence within the RNA component of the enzyme. The sequence is that of Telomerase reverse transcriptase (TERT) from Oryza sativa subsp. japonica (Rice).